Reading from the N-terminus, the 461-residue chain is Ribulose bisphosphate carboxylase (461 aa).

Asparagine 112 is a binding site for substrate. Catalysis depends on lysine 167, which acts as the Proton acceptor. Lysine 169 contributes to the substrate binding site. Mg(2+) is bound by residues lysine 192, aspartate 194, and glutamate 195. Position 192 is an N6-carboxylysine (lysine 192). Histidine 288 acts as the Proton acceptor in catalysis. Substrate is bound by residues arginine 289, histidine 322, and serine 369.

The protein belongs to the RuBisCO large chain family. Type II subfamily. Homodimer. The cofactor is Mg(2+).

The catalysed reaction is 2 (2R)-3-phosphoglycerate + 2 H(+) = D-ribulose 1,5-bisphosphate + CO2 + H2O. It catalyses the reaction D-ribulose 1,5-bisphosphate + O2 = 2-phosphoglycolate + (2R)-3-phosphoglycerate + 2 H(+). Functionally, ruBisCO catalyzes two reactions: the carboxylation of D-ribulose 1,5-bisphosphate, the primary event in carbon dioxide fixation, as well as the oxidative fragmentation of the pentose substrate. Both reactions occur simultaneously and in competition at the same active site. The protein is Ribulose bisphosphate carboxylase of Rhodopseudomonas palustris (strain ATCC BAA-98 / CGA009).